The sequence spans 165 residues: Endoribonuclease YbeY (165 aa).

Positions 130, 134, and 140 each coordinate Zn(2+).

It belongs to the endoribonuclease YbeY family. Requires Zn(2+) as cofactor.

The protein localises to the cytoplasm. In terms of biological role, single strand-specific metallo-endoribonuclease involved in late-stage 70S ribosome quality control and in maturation of the 3' terminus of the 16S rRNA. The sequence is that of Endoribonuclease YbeY from Streptococcus sanguinis (strain SK36).